The sequence spans 303 residues: Pseudouridine-5'-phosphate glycosidase (303 aa).

Glutamate 23 (proton donor) is an active-site residue. Substrate-binding residues include lysine 85 and valine 105. Position 137 (aspartate 137) interacts with Mn(2+). A substrate-binding site is contributed by 139-141 (SQD). Residue lysine 158 is the Nucleophile of the active site.

It belongs to the pseudouridine-5'-phosphate glycosidase family. In terms of assembly, homotrimer. It depends on Mn(2+) as a cofactor.

The enzyme catalyses D-ribose 5-phosphate + uracil = psi-UMP + H2O. In terms of biological role, catalyzes the reversible cleavage of pseudouridine 5'-phosphate (PsiMP) to ribose 5-phosphate and uracil. Functions biologically in the cleavage direction, as part of a pseudouridine degradation pathway. The chain is Pseudouridine-5'-phosphate glycosidase from Myxococcus xanthus (strain DK1622).